The sequence spans 1166 residues: DEAD-box ATP-dependent RNA helicase 42 (1166 aa).

2 stretches are compositionally biased toward basic and acidic residues: residues 1–12 and 21–45; these read MEVEKSKYRSED and DLKK…EKRR. The segment at 1–460 is disordered; that stretch reads MEVEKSKYRS…NDDDPSLDED (460 aa). Residues 14–95 are a coiled coil; that stretch reads DVVEEEADLK…KDRVKRRSER (82 aa). The span at 59 to 70 shows a compositional bias: acidic residues; sequence SEDDYDRDDDEE. A compositionally biased stretch (basic residues) spans 80–95; it reads ERRRRDKDRVKRRSER. Residues 101 to 110 show a composition bias toward acidic residues; the sequence is SEDDVEEEDE. Positions 111-206 are enriched in basic and acidic residues; the sequence is RDKRRVNEKE…RERERSREVG (96 aa). Positions 130–302 form a coiled coil; it reads RGKDRKRDRE…KRKKEEAESE (173 aa). S210 is subject to Phosphoserine. Positions 224–314 are enriched in basic and acidic residues; sequence EGGERKEKER…GDADGNEPKA (91 aa). S324 is modified (phosphoserine). Basic and acidic residues-rich tracts occupy residues 344–357 and 416–426; these read ETKP…KMVD and MNGKESGDRPK. Residues 529–557 carry the Q motif motif; it reads KFWHQTGLTSKILDTMKKLNYEKPMPIQT. Residues 560-738 form the Helicase ATP-binding domain; it reads LPIIMSGRDC…RKVLNKPVEI (179 aa). 573 to 580 is a binding site for ATP; that stretch reads AKTGSGKT. Residues 686–689 carry the DEAD box motif; that stretch reads DEAD. The 162-residue stretch at 749 to 910 folds into the Helicase C-terminal domain; it reads DITQLVEVRP…PVPDDLKALA (162 aa).

The protein belongs to the DEAD box helicase family. DDX46/PRP5 subfamily.

The protein resides in the nucleus. The enzyme catalyses ATP + H2O = ADP + phosphate + H(+). In terms of biological role, helicase required for pre-mRNA splicing, cold-responsive gene regulation and cold tolerance. This is DEAD-box ATP-dependent RNA helicase 42 (RH42) from Arabidopsis thaliana (Mouse-ear cress).